We begin with the raw amino-acid sequence, 83 residues long: Small ribosomal subunit protein bS18 (83 aa).

The protein belongs to the bacterial ribosomal protein bS18 family. As to quaternary structure, part of the 30S ribosomal subunit. Forms a tight heterodimer with protein bS6.

Its function is as follows. Binds as a heterodimer with protein bS6 to the central domain of the 16S rRNA, where it helps stabilize the platform of the 30S subunit. The sequence is that of Small ribosomal subunit protein bS18 from Methylobacterium sp. (strain 4-46).